A 98-amino-acid polypeptide reads, in one-letter code: Plastocyanin (98 aa).

Residues 1–98 (AQIVKLGGDD…AGMKMTITVQ (98 aa)) form the Plastocyanin-like domain. Positions 38, 83, 86, and 91 each coordinate Cu cation.

The protein belongs to the plastocyanin family. Requires Cu(2+) as cofactor.

The protein resides in the plastid. It is found in the chloroplast thylakoid membrane. Functionally, participates in electron transfer between P700 and the cytochrome b6-f complex in photosystem I. The protein is Plastocyanin (PETE) of Ulva arasakii (Sea lettuce).